A 237-amino-acid polypeptide reads, in one-letter code: Leucyl/phenylalanyl-tRNA--protein transferase (237 aa).

This sequence belongs to the L/F-transferase family.

It is found in the cytoplasm. The catalysed reaction is N-terminal L-lysyl-[protein] + L-leucyl-tRNA(Leu) = N-terminal L-leucyl-L-lysyl-[protein] + tRNA(Leu) + H(+). It catalyses the reaction N-terminal L-arginyl-[protein] + L-leucyl-tRNA(Leu) = N-terminal L-leucyl-L-arginyl-[protein] + tRNA(Leu) + H(+). It carries out the reaction L-phenylalanyl-tRNA(Phe) + an N-terminal L-alpha-aminoacyl-[protein] = an N-terminal L-phenylalanyl-L-alpha-aminoacyl-[protein] + tRNA(Phe). Its function is as follows. Functions in the N-end rule pathway of protein degradation where it conjugates Leu, Phe and, less efficiently, Met from aminoacyl-tRNAs to the N-termini of proteins containing an N-terminal arginine or lysine. This Vibrio vulnificus (strain CMCP6) protein is Leucyl/phenylalanyl-tRNA--protein transferase (aat).